The primary structure comprises 216 residues: Cytochrome c oxidase subunit 2 (216 aa).

At 1–8 (LGLQNATS) the chain is on the mitochondrial intermembrane side. Residues 9–39 (PIMEELIAFHDHALMIIFLISSLVLYIISLM) traverse the membrane as a helical segment. Over 40-53 (LTTKLTHTSTMNAQ) the chain is Mitochondrial matrix. A helical transmembrane segment spans residues 54–81 (EIEMIWTILPAVILIMIALPSLRILYMT). Residues 82-216 (DEFNKPYLTL…FIYFQDFEVW (135 aa)) lie on the Mitochondrial intermembrane side of the membrane. Cu cation contacts are provided by His155, Cys190, Glu192, Cys194, His198, and Met201. Glu192 is a Mg(2+) binding site.

The protein belongs to the cytochrome c oxidase subunit 2 family. In terms of assembly, component of the cytochrome c oxidase (complex IV, CIV), a multisubunit enzyme composed of 14 subunits. The complex is composed of a catalytic core of 3 subunits MT-CO1, MT-CO2 and MT-CO3, encoded in the mitochondrial DNA, and 11 supernumerary subunits COX4I, COX5A, COX5B, COX6A, COX6B, COX6C, COX7A, COX7B, COX7C, COX8 and NDUFA4, which are encoded in the nuclear genome. The complex exists as a monomer or a dimer and forms supercomplexes (SCs) in the inner mitochondrial membrane with NADH-ubiquinone oxidoreductase (complex I, CI) and ubiquinol-cytochrome c oxidoreductase (cytochrome b-c1 complex, complex III, CIII), resulting in different assemblies (supercomplex SCI(1)III(2)IV(1) and megacomplex MCI(2)III(2)IV(2)). Found in a complex with TMEM177, COA6, COX18, COX20, SCO1 and SCO2. Interacts with TMEM177 in a COX20-dependent manner. Interacts with COX20. Interacts with COX16. It depends on Cu cation as a cofactor.

Its subcellular location is the mitochondrion inner membrane. It catalyses the reaction 4 Fe(II)-[cytochrome c] + O2 + 8 H(+)(in) = 4 Fe(III)-[cytochrome c] + 2 H2O + 4 H(+)(out). In terms of biological role, component of the cytochrome c oxidase, the last enzyme in the mitochondrial electron transport chain which drives oxidative phosphorylation. The respiratory chain contains 3 multisubunit complexes succinate dehydrogenase (complex II, CII), ubiquinol-cytochrome c oxidoreductase (cytochrome b-c1 complex, complex III, CIII) and cytochrome c oxidase (complex IV, CIV), that cooperate to transfer electrons derived from NADH and succinate to molecular oxygen, creating an electrochemical gradient over the inner membrane that drives transmembrane transport and the ATP synthase. Cytochrome c oxidase is the component of the respiratory chain that catalyzes the reduction of oxygen to water. Electrons originating from reduced cytochrome c in the intermembrane space (IMS) are transferred via the dinuclear copper A center (CU(A)) of subunit 2 and heme A of subunit 1 to the active site in subunit 1, a binuclear center (BNC) formed by heme A3 and copper B (CU(B)). The BNC reduces molecular oxygen to 2 water molecules using 4 electrons from cytochrome c in the IMS and 4 protons from the mitochondrial matrix. The sequence is that of Cytochrome c oxidase subunit 2 (MT-CO2) from Callimico goeldii (Goeldi's marmoset).